The primary structure comprises 245 residues: Leucyl/phenylalanyl-tRNA--protein transferase (245 aa).

This sequence belongs to the L/F-transferase family.

It is found in the cytoplasm. The catalysed reaction is N-terminal L-lysyl-[protein] + L-leucyl-tRNA(Leu) = N-terminal L-leucyl-L-lysyl-[protein] + tRNA(Leu) + H(+). It catalyses the reaction N-terminal L-arginyl-[protein] + L-leucyl-tRNA(Leu) = N-terminal L-leucyl-L-arginyl-[protein] + tRNA(Leu) + H(+). It carries out the reaction L-phenylalanyl-tRNA(Phe) + an N-terminal L-alpha-aminoacyl-[protein] = an N-terminal L-phenylalanyl-L-alpha-aminoacyl-[protein] + tRNA(Phe). Its function is as follows. Functions in the N-end rule pathway of protein degradation where it conjugates Leu, Phe and, less efficiently, Met from aminoacyl-tRNAs to the N-termini of proteins containing an N-terminal arginine or lysine. The sequence is that of Leucyl/phenylalanyl-tRNA--protein transferase from Paraburkholderia phymatum (strain DSM 17167 / CIP 108236 / LMG 21445 / STM815) (Burkholderia phymatum).